We begin with the raw amino-acid sequence, 505 residues long: Apolipoprotein N-acyltransferase (505 aa).

The next 6 membrane-spanning stretches (helical) occupy residues 23 to 43, 58 to 78, 85 to 105, 125 to 145, 162 to 182, and 192 to 212; these read LLAL…AVLY, GWWF…VSMN, PLLA…FFAL, LCFA…LTGF, LAPL…AALL, and PSFL…GLAL. One can recognise a CN hydrolase domain in the interval 230-469; it reads IQGNVEQDLK…QAVLYGEVVP (240 aa). Glu-269 (proton acceptor) is an active-site residue. The active site involves Lys-329. The Nucleophile role is filled by Cys-381. The helical transmembrane segment at 482–502 threads the bilayer; it reads WPLAIVCALLLGWALLAGRIA.

It belongs to the CN hydrolase family. Apolipoprotein N-acyltransferase subfamily.

Its subcellular location is the cell inner membrane. It catalyses the reaction N-terminal S-1,2-diacyl-sn-glyceryl-L-cysteinyl-[lipoprotein] + a glycerophospholipid = N-acyl-S-1,2-diacyl-sn-glyceryl-L-cysteinyl-[lipoprotein] + a 2-acyl-sn-glycero-3-phospholipid + H(+). It functions in the pathway protein modification; lipoprotein biosynthesis (N-acyl transfer). Catalyzes the phospholipid dependent N-acylation of the N-terminal cysteine of apolipoprotein, the last step in lipoprotein maturation. The polypeptide is Apolipoprotein N-acyltransferase (Pseudomonas putida (strain ATCC 47054 / DSM 6125 / CFBP 8728 / NCIMB 11950 / KT2440)).